A 482-amino-acid chain; its full sequence is UDP-N-acetylmuramate--L-alanine ligase (482 aa).

G115–T121 lines the ATP pocket.

It belongs to the MurCDEF family.

The protein localises to the cytoplasm. It carries out the reaction UDP-N-acetyl-alpha-D-muramate + L-alanine + ATP = UDP-N-acetyl-alpha-D-muramoyl-L-alanine + ADP + phosphate + H(+). It functions in the pathway cell wall biogenesis; peptidoglycan biosynthesis. In terms of biological role, cell wall formation. The sequence is that of UDP-N-acetylmuramate--L-alanine ligase from Rhodospirillum centenum (strain ATCC 51521 / SW).